Here is a 199-residue protein sequence, read N- to C-terminus: uncharacterized protein (199 aa).

Residues 1-30 (MEDAAAPGRTEGVLERQGAPPAAGQGGALV) are disordered. A coiled-coil region spans residues 71–101 (RANATNKLTVIAEQIQHLQEQARKVLEDAHR).

This is an uncharacterized protein from Homo sapiens (Human).